The sequence spans 138 residues: Large ribosomal subunit protein uL16c (138 aa).

The protein belongs to the universal ribosomal protein uL16 family. Part of the 50S ribosomal subunit.

It localises to the plastid. Its subcellular location is the chloroplast. The polypeptide is Large ribosomal subunit protein uL16c (Phaeodactylum tricornutum (strain CCAP 1055/1)).